Reading from the N-terminus, the 218-residue chain is Synaptonemal complex central element protein 2 (218 aa).

Positions Met1–Glu32 are enriched in basic and acidic residues. The tract at residues Met1–Pro42 is disordered. Residues Ser61–Lys87 are a coiled coil. A disordered region spans residues Arg171–Cys218. Positions Val198 to Gln211 are enriched in polar residues.

Belongs to the SYCE family. As to quaternary structure, homodimer. Found in a complex with SYCP1 and SYCE1. Interacts with SYCP1, SYCE1 and SYCE3. Interacts with TEX12.

It is found in the nucleus. Its subcellular location is the chromosome. Major component of the transverse central element of synaptonemal complexes (SCS), formed between homologous chromosomes during meiotic prophase. Requires SYCP1 in order to be incorporated into the central element. May have a role in the synaptonemal complex assembly, stabilization and recombination. The polypeptide is Synaptonemal complex central element protein 2 (SYCE2) (Homo sapiens (Human)).